The following is a 513-amino-acid chain: MGAAAKLAFAVFLISCSSGAILGRSETQECIFYNANWERDRTNRTGVESCYGDKDKRRHCFATWKNISGSIEIVKQGCWLDDINCYDRTDCIEKKDSPEVYFCCCEGNMCNERFSYFPEMEVTQPTSNPVTPKPPYYNILLYSLVPLMLIAGIVICAFWVYRHHKMAYPPVLVPTQDPGPPPPSPLLGLKPLQLLEVKARGRFGCVWKAQLLNEYVAVKIFPIQDKQSWQNEYEVYSLPGMKHENILQFIGAEKRGTSVDVDLWLITAFHEKGSLSDFLKANVVSWNELCHIAETMARGLAYLHEDIPGLKDGHKPAISHRDIKSKNVLLKNNLTACIADFGLALKFEAGKSAGDTHGQVGTRRYMAPEVLEGAINFQRDAFLRIDMYAMGLVLWELASRCTAADGPVDEYMLPFEEEIGQHPSLEDMQEVVVHKKKRPVLRDYWQKHAGMAMLCETIEECWDHDAEARLSAGCVGERITQMQRLTNIITTEDIVTVVTMVTNVDFPPKESSL.

Residues 1 to 19 (MGAAAKLAFAVFLISCSSG) form the signal peptide. Residues 20-135 (AILGRSETQE…TSNPVTPKPP (116 aa)) lie on the Extracellular side of the membrane. 5 disulfides stabilise this stretch: Cys-30–Cys-60, Cys-50–Cys-78, Cys-85–Cys-104, Cys-91–Cys-103, and Cys-105–Cys-110. Residues Asn-43 and Asn-66 are each glycosylated (N-linked (GlcNAc...) asparagine). A helical membrane pass occupies residues 136-161 (YYNILLYSLVPLMLIAGIVICAFWVY). Topologically, residues 162–513 (RHHKMAYPPV…VDFPPKESSL (352 aa)) are cytoplasmic. A Protein kinase domain is found at 192–485 (LQLLEVKARG…GERITQMQRL (294 aa)). Residues 198–206 (KARGRFGCV) and Lys-219 each bind ATP. Asp-322 serves as the catalytic Proton acceptor.

It belongs to the protein kinase superfamily. TKL Ser/Thr protein kinase family. TGFB receptor subfamily. Part of a complex consisting of MAGI2/ARIP1, ACVR2A, ACVR1B and SMAD3. Interacts with MAGI2/ARIP1. Interacts with type I receptor ACVR1. Interacts with BMP7. Interacts with TSC22D1/TSC-22. Interacts with activin A/INHBA. The cofactor is Mg(2+). Mn(2+) serves as cofactor.

It is found in the cell membrane. It carries out the reaction L-threonyl-[receptor-protein] + ATP = O-phospho-L-threonyl-[receptor-protein] + ADP + H(+). The enzyme catalyses L-seryl-[receptor-protein] + ATP = O-phospho-L-seryl-[receptor-protein] + ADP + H(+). On ligand binding, forms a receptor complex consisting of two type II and two type I transmembrane serine/threonine kinases. Type II receptors phosphorylate and activate type I receptors which autophosphorylate, then bind and activate SMAD transcriptional regulators. Receptor for activin A, activin B and inhibin A. Mediates induction of adipogenesis by GDF6. The polypeptide is Activin receptor type-2A (ACVR2A) (Bos taurus (Bovine)).